Consider the following 158-residue polypeptide: Adenosine 5'-monophosphoramidase HNT1 (158 aa).

Residues 26 to 129 form the HIT domain; sequence IFCKIIKSEI…IPKRDEKSGL (104 aa). Residues 51–52, Asn-103, 109–111, and 116–118 each bind AMP; these read DI, HQE, and HFH. The Histidine triad motif signature appears at 114-118; the sequence is HVHFH. The Tele-AMP-histidine intermediate role is filled by His-116.

The protein belongs to the HINT family. As to quaternary structure, homodimer. Interacts with KIN28. The cofactor is Mg(2+).

It carries out the reaction adenosine 5'-phosphoramidate + H2O = AMP + NH4(+). Hydrolyzes adenosine 5'-monophosphoramidate substrates such as AMP-morpholidate, AMP-N-alanine methyl ester, AMP-alpha-acetyl lysine methyl ester and AMP-NH2. Plays a role in the regulation of kinase KIN28 function. Essential for growth on galactose media at elevated temperatures. The polypeptide is Adenosine 5'-monophosphoramidase HNT1 (Saccharomyces cerevisiae (strain ATCC 204508 / S288c) (Baker's yeast)).